The primary structure comprises 634 residues: UPF0329 protein ECU11_2090 (634 aa).

2 stretches are compositionally biased toward basic and acidic residues: residues 354 to 365 and 397 to 407; these read REEREKREESKG and GESKEEDRGEE. The segment at 354 to 438 is disordered; sequence REEREKREES…KGSGEKRISE (85 aa). Positions 408–417 are enriched in acidic residues; sequence GGVEAEDPLE.

The protein belongs to the UPF0329 family.

In Encephalitozoon cuniculi (strain GB-M1) (Microsporidian parasite), this protein is UPF0329 protein ECU11_2090.